The primary structure comprises 101 residues: Small ribosomal subunit protein uS10 (101 aa).

This sequence belongs to the universal ribosomal protein uS10 family. In terms of assembly, part of the 30S ribosomal subunit.

In terms of biological role, involved in the binding of tRNA to the ribosomes. This chain is Small ribosomal subunit protein uS10, found in Mycobacterium leprae (strain Br4923).